Consider the following 365-residue polypeptide: uncharacterized protein (365 aa).

31–38 (GPINSGKT) provides a ligand contact to ATP.

The protein belongs to the archaeal ATPase family.

This is an uncharacterized protein from Methanocaldococcus jannaschii (strain ATCC 43067 / DSM 2661 / JAL-1 / JCM 10045 / NBRC 100440) (Methanococcus jannaschii).